A 299-amino-acid chain; its full sequence is Protein NSG2 (299 aa).

At Met-1–Asn-108 the chain is on the cytoplasmic side. Ser-90 carries the phosphoserine modification. A helical membrane pass occupies residues Ile-109 to Leu-129. Over Ser-130 to Gly-161 the chain is Lumenal. The chain crosses the membrane as a helical span at residues Val-162–Ile-182. Over Leu-183–Asn-237 the chain is Cytoplasmic. A helical membrane pass occupies residues Ile-238–Gly-258. At Val-259 to Asp-268 the chain is on the lumenal side. A helical membrane pass occupies residues Ile-269 to Phe-289. Residues Gly-290 to His-299 are Cytoplasmic-facing.

Belongs to the INSIG family.

The protein localises to the endoplasmic reticulum membrane. Functionally, stabilizes the HMG-CoA reductase HMG2 by preventing its HRD1-dependent degradation. Binds directly to the sterol-sensing domain (SSD)-containing transmembrane region of HMG2, promoting its folding to protect it from degradation. This Saccharomyces cerevisiae (strain ATCC 204508 / S288c) (Baker's yeast) protein is Protein NSG2 (NSG2).